We begin with the raw amino-acid sequence, 1462 residues long: Protein peg1 (1462 aa).

2 disordered regions span residues 528-563 and 573-592; these read SFSK…SRER and FHST…SIAI. 2 stretches are compositionally biased toward low complexity: residues 538-552 and 574-589; these read SSNS…RLGL and HSTS…HSPS. Phosphoserine is present on S599. The interval 838 to 928 is disordered; sequence SSTHQEHLSK…NCSEESLDDH (91 aa). Residues 847–866 show a composition bias toward low complexity; the sequence is KNLPTLNTSSSSNSSQTDLL. Basic and acidic residues predominate over residues 870–896; it reads GKGETKETEMQSPIESKEGLLSKDTHI. S1221 carries the phosphoserine modification. Positions 1342 to 1367 form a coiled coil; the sequence is TLIAEIADLQGLYEFTQQRLQSLNTE.

This sequence belongs to the CLASP family. As to quaternary structure, interacts with microtubules. Interacts with dhc1, mal3 and tea1.

The protein resides in the cytoplasm. It is found in the cytoskeleton. Its subcellular location is the spindle. The protein localises to the microtubule organizing center. It localises to the spindle pole body. Functionally, microtubule binding protein that regulates the stability of dynamic microtubules. Required for mitotic spindle formation. This Schizosaccharomyces pombe (strain 972 / ATCC 24843) (Fission yeast) protein is Protein peg1 (peg1).